The primary structure comprises 622 residues: Putative DEAD-box ATP-dependent RNA helicase 44 (622 aa).

The tract at residues D50–E97 is disordered. Over residues D66–E97 the composition is skewed to basic and acidic residues. In terms of domain architecture, Helicase ATP-binding spans I241–V436. S254–T261 contacts ATP. A DEAD box motif is present at residues D367–D370. The Helicase C-terminal domain maps to R460 to E606.

It belongs to the DEAD box helicase family. DDX23/PRP28 subfamily.

The catalysed reaction is ATP + H2O = ADP + phosphate + H(+). The chain is Putative DEAD-box ATP-dependent RNA helicase 44 (RH44) from Arabidopsis thaliana (Mouse-ear cress).